The following is a 278-amino-acid chain: MRIRHRLCRFRKSKHVRHQRFRSRIFHRDSAVAKEMKKPFVVVLTGAGISAESGIRTFRADDGLWEDHRVEDVATPEGYRRDPELVQRFYNERRRQLQQPDIAPNAAHFALADLEAVLGDNLVLITQNIDNLHERAGSKRVIHMHGELLKVRCTQSGQVLDWQGDLSADERCHCCQFPSPLRPHIVWFGEMPMGMDDIYQALAEADFFISIGTSGHVYPAAGFVHESHLHGAHTVELNLEPSQVESQFDEKHYGLASKVVPEYIREFLTTCGENRQGD.

The region spanning 22-270 is the Deacetylase sirtuin-type domain; sequence RSRIFHRDSA…PEYIREFLTT (249 aa). Residue 46-65 participates in NAD(+) binding; the sequence is GAGISAESGIRTFRADDGLW. The substrate site is built by tyrosine 90 and arginine 93. 127 to 130 is an NAD(+) binding site; that stretch reads QNID. Histidine 145 (proton acceptor) is an active-site residue. Cysteine 153 and cysteine 172 together coordinate Zn(2+). Residues 212–214, 238–240, and alanine 256 each bind NAD(+); these read GTS and NLE.

This sequence belongs to the sirtuin family. Class III subfamily. It depends on Zn(2+) as a cofactor.

It is found in the cytoplasm. The catalysed reaction is N(6)-acetyl-L-lysyl-[protein] + NAD(+) + H2O = 2''-O-acetyl-ADP-D-ribose + nicotinamide + L-lysyl-[protein]. It carries out the reaction N(6)-succinyl-L-lysyl-[protein] + NAD(+) + H2O = 2''-O-succinyl-ADP-D-ribose + nicotinamide + L-lysyl-[protein]. It catalyses the reaction N(6)-(2-hydroxyisobutanoyl)-L-lysyl-[protein] + NAD(+) + H2O = 2''-O-(2-hydroxyisobutanoyl)-ADP-D-ribose + nicotinamide + L-lysyl-[protein]. Functionally, NAD-dependent lysine deacetylase that specifically removes acetyl groups on target proteins. Also acts as a protein-lysine deacylase by mediating protein desuccinylation and de-2-hydroxyisobutyrylation. Modulates the activities of several proteins which are inactive in their acylated form. This Yersinia pestis protein is NAD-dependent protein deacylase.